A 73-amino-acid chain; its full sequence is Large ribosomal subunit protein bL31 (73 aa).

Belongs to the bacterial ribosomal protein bL31 family. Type A subfamily. Part of the 50S ribosomal subunit.

In terms of biological role, binds the 23S rRNA. The polypeptide is Large ribosomal subunit protein bL31 (Dinoroseobacter shibae (strain DSM 16493 / NCIMB 14021 / DFL 12)).